A 341-amino-acid chain; its full sequence is DNA-directed RNA polymerase subunit alpha (341 aa).

Residues 1-233 (MLKDGTSVSN…DLLSPFLHTK (233 aa)) form an alpha N-terminal domain (alpha-NTD) region. Residues 262-341 (SEGDFFKNTF…NEKPRVVGDE (80 aa)) form an alpha C-terminal domain (alpha-CTD) region.

It belongs to the RNA polymerase alpha chain family. In plastids the minimal PEP RNA polymerase catalytic core is composed of four subunits: alpha, beta, beta', and beta''. When a (nuclear-encoded) sigma factor is associated with the core the holoenzyme is formed, which can initiate transcription.

The protein localises to the plastid. It is found in the chloroplast. The catalysed reaction is RNA(n) + a ribonucleoside 5'-triphosphate = RNA(n+1) + diphosphate. In terms of biological role, DNA-dependent RNA polymerase catalyzes the transcription of DNA into RNA using the four ribonucleoside triphosphates as substrates. The sequence is that of DNA-directed RNA polymerase subunit alpha from Marsilea quadrifolia (European water clover).